Consider the following 143-residue polypeptide: Probable cyclic pyranopterin monophosphate synthase (143 aa).

Substrate is bound by residues 61 to 63 (YCH) and 97 to 98 (ME). Aspartate 112 is an active-site residue.

The protein belongs to the MoaC family. In terms of assembly, homohexamer; trimer of dimers.

It catalyses the reaction (8S)-3',8-cyclo-7,8-dihydroguanosine 5'-triphosphate = cyclic pyranopterin phosphate + diphosphate. It participates in cofactor biosynthesis; molybdopterin biosynthesis. In terms of biological role, catalyzes the conversion of (8S)-3',8-cyclo-7,8-dihydroguanosine 5'-triphosphate to cyclic pyranopterin monophosphate (cPMP). The sequence is that of Probable cyclic pyranopterin monophosphate synthase from Thermoplasma acidophilum (strain ATCC 25905 / DSM 1728 / JCM 9062 / NBRC 15155 / AMRC-C165).